The primary structure comprises 121 residues: Large ribosomal subunit protein bL12 (121 aa).

Belongs to the bacterial ribosomal protein bL12 family. As to quaternary structure, homodimer. Part of the ribosomal stalk of the 50S ribosomal subunit. Forms a multimeric L10(L12)X complex, where L10 forms an elongated spine to which 2 to 4 L12 dimers bind in a sequential fashion. Binds GTP-bound translation factors.

Its function is as follows. Forms part of the ribosomal stalk which helps the ribosome interact with GTP-bound translation factors. Is thus essential for accurate translation. This chain is Large ribosomal subunit protein bL12, found in Salmonella agona (strain SL483).